The primary structure comprises 202 residues: Large ribosomal subunit protein bL9 (202 aa).

Residues 168-202 (DEAGFTEDYDPNAEPGEIPTELQDEAPAAEATDEA) are disordered. A compositionally biased stretch (low complexity) spans 192 to 202 (EAPAAEATDEA).

The protein belongs to the bacterial ribosomal protein bL9 family.

Its function is as follows. Binds to the 23S rRNA. The chain is Large ribosomal subunit protein bL9 from Rhizorhabdus wittichii (strain DSM 6014 / CCUG 31198 / JCM 15750 / NBRC 105917 / EY 4224 / RW1) (Sphingomonas wittichii).